The primary structure comprises 412 residues: Argininosuccinate synthase (412 aa).

ATP contacts are provided by residues 10 to 18 (AYSGGLDTS) and Ala36. Positions 87 and 92 each coordinate L-citrulline. Residue 115 to 123 (SHGATGKGN) coordinates ATP. L-aspartate is bound by residues Thr119, Asn123, and Asp124. Asn123 serves as a coordination point for L-citrulline. Positions 127, 180, 189, 270, and 282 each coordinate L-citrulline.

Belongs to the argininosuccinate synthase family. As to quaternary structure, homotetramer.

It carries out the reaction L-citrulline + L-aspartate + ATP = 2-(N(omega)-L-arginino)succinate + AMP + diphosphate + H(+). It participates in amino-acid biosynthesis; L-arginine biosynthesis; L-arginine from L-ornithine and carbamoyl phosphate: step 2/3. It functions in the pathway nitrogen metabolism; urea cycle; (N(omega)-L-arginino)succinate from L-aspartate and L-citrulline: step 1/1. The chain is Argininosuccinate synthase from Aedes aegypti (Yellowfever mosquito).